A 147-amino-acid polypeptide reads, in one-letter code: UPF0306 protein YhbP (147 aa).

Belongs to the UPF0306 family.

In Escherichia coli (strain K12 / MC4100 / BW2952), this protein is UPF0306 protein YhbP.